The following is a 157-amino-acid chain: Probable succinate transporter subunit YjjB (157 aa).

Helical transmembrane passes span 8–28, 50–70, 87–107, and 129–149; these read LALAQDMILAAIPAVGFAMVF, MILMTSGLNIEWSTFMASMLV, VFTVAAVIPMFPGISAYTAMI, and FLTASSIVGALSIGLSIPGLW.

It belongs to the ThrE exporter (TC 2.A.79) family. In terms of assembly, the transporter is composed of YjjB and YjjP.

Its subcellular location is the cell inner membrane. In terms of biological role, involved in succinate export with YjjP. Both proteins are required for export. The protein is Probable succinate transporter subunit YjjB of Escherichia coli O1:K1 / APEC.